Here is a 753-residue protein sequence, read N- to C-terminus: Protein transport protein SEC23-1 (753 aa).

The Zn(2+) site is built by C56, C61, C80, and C83.

The protein belongs to the SEC23/SEC24 family. SEC23 subfamily. As to quaternary structure, the COPII coat is composed of at least 5 proteins: the SEC23/24 complex, the SEC13/31 complex, and the protein SAR1.

It localises to the cytoplasm. It is found in the cytoplasmic vesicle. The protein localises to the COPII-coated vesicle membrane. The protein resides in the endoplasmic reticulum membrane. Its subcellular location is the golgi apparatus membrane. In terms of biological role, component of the coat protein complex II (COPII) which promotes the formation of transport vesicles from the endoplasmic reticulum (ER). The coat has two main functions, the physical deformation of the endoplasmic reticulum membrane into vesicles and the selection of cargo molecules. The protein is Protein transport protein SEC23-1 (SEC231) of Candida glabrata (strain ATCC 2001 / BCRC 20586 / JCM 3761 / NBRC 0622 / NRRL Y-65 / CBS 138) (Yeast).